The primary structure comprises 217 residues: LexA repressor (217 aa).

The H-T-H motif DNA-binding region spans 26–46 (FEEMKLALDLKSKSGIHRLIK). Catalysis depends on for autocatalytic cleavage activity residues Ser138 and Lys176.

It belongs to the peptidase S24 family. In terms of assembly, homodimer.

It carries out the reaction Hydrolysis of Ala-|-Gly bond in repressor LexA.. Functionally, represses a number of genes involved in the response to DNA damage (SOS response), including recA and lexA. In the presence of single-stranded DNA, RecA interacts with LexA causing an autocatalytic cleavage which disrupts the DNA-binding part of LexA, leading to derepression of the SOS regulon and eventually DNA repair. The chain is LexA repressor from Zymomonas mobilis subsp. mobilis (strain ATCC 31821 / ZM4 / CP4).